A 262-amino-acid chain; its full sequence is Acyl-[acyl-carrier-protein]--UDP-N-acetylglucosamine O-acyltransferase (262 aa).

The protein belongs to the transferase hexapeptide repeat family. LpxA subfamily. Homotrimer.

The protein resides in the cytoplasm. The catalysed reaction is a (3R)-hydroxyacyl-[ACP] + UDP-N-acetyl-alpha-D-glucosamine = a UDP-3-O-[(3R)-3-hydroxyacyl]-N-acetyl-alpha-D-glucosamine + holo-[ACP]. Its pathway is glycolipid biosynthesis; lipid IV(A) biosynthesis; lipid IV(A) from (3R)-3-hydroxytetradecanoyl-[acyl-carrier-protein] and UDP-N-acetyl-alpha-D-glucosamine: step 1/6. Its function is as follows. Involved in the biosynthesis of lipid A, a phosphorylated glycolipid that anchors the lipopolysaccharide to the outer membrane of the cell. The chain is Acyl-[acyl-carrier-protein]--UDP-N-acetylglucosamine O-acyltransferase from Campylobacter concisus (strain 13826).